A 393-amino-acid polypeptide reads, in one-letter code: NAD(P)H-quinone oxidoreductase subunit H, chloroplastic (393 aa).

Belongs to the complex I 49 kDa subunit family. NDH is composed of at least 16 different subunits, 5 of which are encoded in the nucleus.

The protein localises to the plastid. The protein resides in the chloroplast thylakoid membrane. The enzyme catalyses a plastoquinone + NADH + (n+1) H(+)(in) = a plastoquinol + NAD(+) + n H(+)(out). It carries out the reaction a plastoquinone + NADPH + (n+1) H(+)(in) = a plastoquinol + NADP(+) + n H(+)(out). NDH shuttles electrons from NAD(P)H:plastoquinone, via FMN and iron-sulfur (Fe-S) centers, to quinones in the photosynthetic chain and possibly in a chloroplast respiratory chain. The immediate electron acceptor for the enzyme in this species is believed to be plastoquinone. Couples the redox reaction to proton translocation, and thus conserves the redox energy in a proton gradient. The sequence is that of NAD(P)H-quinone oxidoreductase subunit H, chloroplastic from Huperzia lucidula (Shining clubmoss).